We begin with the raw amino-acid sequence, 387 residues long: 1-deoxy-D-xylulose 5-phosphate reductoisomerase (387 aa).

NADPH-binding residues include Thr11, Gly12, Ser13, Ile14, Gly37, Arg38, Gln39, and Asn127. Lys128 contacts 1-deoxy-D-xylulose 5-phosphate. Position 129 (Glu129) interacts with NADPH. Position 153 (Asp153) interacts with Mn(2+). 1-deoxy-D-xylulose 5-phosphate contacts are provided by Ser154, Glu155, Ser179, and His200. Residue Glu155 participates in Mn(2+) binding. Position 206 (Gly206) interacts with NADPH. The 1-deoxy-D-xylulose 5-phosphate site is built by Ser213, Asn218, Lys219, and Glu222. Glu222 provides a ligand contact to Mn(2+).

The protein belongs to the DXR family. The cofactor is Mg(2+). Mn(2+) is required as a cofactor.

It carries out the reaction 2-C-methyl-D-erythritol 4-phosphate + NADP(+) = 1-deoxy-D-xylulose 5-phosphate + NADPH + H(+). Its pathway is isoprenoid biosynthesis; isopentenyl diphosphate biosynthesis via DXP pathway; isopentenyl diphosphate from 1-deoxy-D-xylulose 5-phosphate: step 1/6. In terms of biological role, catalyzes the NADPH-dependent rearrangement and reduction of 1-deoxy-D-xylulose-5-phosphate (DXP) to 2-C-methyl-D-erythritol 4-phosphate (MEP). This is 1-deoxy-D-xylulose 5-phosphate reductoisomerase from Symbiobacterium thermophilum (strain DSM 24528 / JCM 14929 / IAM 14863 / T).